We begin with the raw amino-acid sequence, 123 residues long: MQFTALFAATAVALVGSVSATACTTTQQTAAYVALVSILSESFFSTCASDSGYSMLTATALPTTAQYELMCASTACQEMIEEIIALNPPDCDLTVPTSGLVINVYEYANDFASTCASLSSSPA.

Residues 1 to 20 (MQFTALFAATAVALVGSVSA) form the signal peptide. Disulfide bonds link Cys23–Cys91, Cys47–Cys76, and Cys71–Cys115.

This sequence belongs to the elicitin family.

The protein resides in the secreted. Functionally, induces local and distal defense responses (incompatible hypersensitive reaction) in plants from the solanaceae and cruciferae families. Elicits leaf necrosis and causes the accumulation of pathogenesis-related proteins. Might interact with the lipidic molecules of the plasma membrane. This Phytophthora cryptogea protein is Highly acidic elicitin 20 (B20).